The chain runs to 487 residues: Glutamyl-tRNA(Gln) amidotransferase subunit A (487 aa).

Active-site charge relay system residues include K77 and S152. The Acyl-ester intermediate role is filled by S176.

This sequence belongs to the amidase family. GatA subfamily. As to quaternary structure, heterotrimer of A, B and C subunits.

The catalysed reaction is L-glutamyl-tRNA(Gln) + L-glutamine + ATP + H2O = L-glutaminyl-tRNA(Gln) + L-glutamate + ADP + phosphate + H(+). Functionally, allows the formation of correctly charged Gln-tRNA(Gln) through the transamidation of misacylated Glu-tRNA(Gln) in organisms which lack glutaminyl-tRNA synthetase. The reaction takes place in the presence of glutamine and ATP through an activated gamma-phospho-Glu-tRNA(Gln). In Lactiplantibacillus plantarum (strain ATCC BAA-793 / NCIMB 8826 / WCFS1) (Lactobacillus plantarum), this protein is Glutamyl-tRNA(Gln) amidotransferase subunit A.